We begin with the raw amino-acid sequence, 401 residues long: Type 3 secretion system translocon protein SctE (401 aa).

The stretch at 129–160 (IQRLHEQNMKKIEENQEKIKETEENAKQVKKS) forms a coiled coil. A run of 2 helical transmembrane segments spans residues 176 to 196 (VIVG…AMMV) and 224 to 244 (ILGP…TVMT). Residues 345–379 (LALNKADMAALQSIIDRLKEELSHLSESHQQVMEL) are a coiled coil.

The protein belongs to the SctE/SipB/YopB family. In terms of assembly, the core secretion machinery of the T3SS is composed of approximately 20 different proteins, including cytoplasmic components, a base, an export apparatus and a needle. This subunit is involved in the formation of a pore, called the translocon, in host membrane. Interacts with YopD/SctB. Together with YopD/SctB, forms a multimeric integral membrane complex.

The protein resides in the secreted. It localises to the host membrane. In terms of biological role, component of the type III secretion system (T3SS), also called injectisome, which is used to inject bacterial effector proteins into eukaryotic host cells. YopB/SctE and YopD/SctB are inserted into the host membrane where they form a pore and allow the translocation of effector proteins into the cytosol of target cells. Is an essential virulence determinant. Required for YopE and YopH translocation. Shows membrane disruptive activity in vitro. Its function is as follows. Interaction with the host cell triggers a signaling response, via activation of the small GTPase Ras, the MAPK kinases ERK and JNK and the nuclear factor NF-kappa-B pathways, and production of the proinflammatory cytokine interleukin-8 (IL-8). YopB/SctE-dependent signaling response is counteracted by YopE, YopH and YopJ in infected host cells. YopB/SctE is directly responsible for signaling and its insertion in the membrane is important to activate the signaling response in the host cell. The polypeptide is Type 3 secretion system translocon protein SctE (Yersinia pseudotuberculosis serotype I (strain IP32953)).